Reading from the N-terminus, the 390-residue chain is 8-demethyl-8-(2-methoxy-alpha-L-rhamnosyl)-tetracenomycin-C 3'-O-methyltransferase (390 aa).

Residues 202–208 (ELGIGGY), serine 217, aspartate 234, 252–253 (SQ), and aspartate 275 each bind S-adenosyl-L-methionine. Aspartate 275 provides a ligand contact to Mg(2+). Catalysis depends on histidine 278, which acts as the Proton acceptor. Mg(2+) is bound by residues glutamate 303 and aspartate 304.

It belongs to the methyltransferase OleY/MycE family. It depends on Mg(2+) as a cofactor.

It catalyses the reaction 8-demethyl-8-(2-O-methyl-alpha-L-rhamnosyl)-tetracenomycin C + S-adenosyl-L-methionine = 8-demethyl-8-(2,3-di-O-methyl-alpha-L-rhamnosyl)-tetracenomycin C + S-adenosyl-L-homocysteine + H(+). It participates in antibiotic biosynthesis. O-methyltransferase involved in the biosynthesis of the permethylated L-rhamnose moiety of elloramycin, an antitumor polyketide. Mediates the methylation of the hydroxy groups at the 3'-position after the sugar moiety has been attached to the aglycon. The protein is 8-demethyl-8-(2-methoxy-alpha-L-rhamnosyl)-tetracenomycin-C 3'-O-methyltransferase of Streptomyces olivaceus.